The chain runs to 329 residues: Probable allantoicase (329 aa).

It belongs to the allantoicase family.

It carries out the reaction allantoate + H2O = (S)-ureidoglycolate + urea. It participates in nitrogen metabolism; (S)-allantoin degradation; (S)-ureidoglycolate from allantoate (aminidohydrolase route): step 1/1. This Nocardia farcinica (strain IFM 10152) protein is Probable allantoicase.